The chain runs to 306 residues: Agmatinase (306 aa).

Residues His-126, Asp-149, His-151, Asp-153, Asp-230, and Asp-232 each contribute to the Mn(2+) site.

This sequence belongs to the arginase family. Agmatinase subfamily. Mn(2+) serves as cofactor.

It catalyses the reaction agmatine + H2O = urea + putrescine. Its pathway is amine and polyamine biosynthesis; putrescine biosynthesis via agmatine pathway; putrescine from agmatine: step 1/1. Catalyzes the formation of putrescine from agmatine. The sequence is that of Agmatinase from Salmonella agona (strain SL483).